A 474-amino-acid chain; its full sequence is Probable CAAX prenyl protease 1 (474 aa).

3 helical membrane passes run 103–123 (SWFS…IIKY), 196–216 (IFVI…SVVV), and 230–250 (FIMY…TIAP). His-332 contributes to the Zn(2+) binding site. The active site involves Glu-333. His-336 provides a ligand contact to Zn(2+). 2 consecutive transmembrane segments (helical) span residues 344–364 (INTI…AAFI) and 381–401 (VIVG…ILTF). Glu-411 contacts Zn(2+). Residue Asp-415 is the Proton donor of the active site.

The protein belongs to the peptidase M48A family. It depends on Zn(2+) as a cofactor.

It localises to the endoplasmic reticulum membrane. The enzyme catalyses Hydrolyzes the peptide bond -P2-(S-farnesyl or geranylgeranyl)C-P1'-P2'-P3'-COOH where P1' and P2' are amino acids with aliphatic side chains and P3' is any C-terminal residue.. Its function is as follows. Proteolytically removes the C-terminal three residues of farnesylated proteins. This Schizosaccharomyces pombe (strain 972 / ATCC 24843) (Fission yeast) protein is Probable CAAX prenyl protease 1.